Reading from the N-terminus, the 313-residue chain is Putative HTH-type transcriptional regulatory protein Msm_0453 (313 aa).

Residues Ile-131–Leu-189 form the HTH cro/C1-type domain. Positions Leu-142 to Asn-161 form a DNA-binding region, H-T-H motif.

The polypeptide is Putative HTH-type transcriptional regulatory protein Msm_0453 (Methanobrevibacter smithii (strain ATCC 35061 / DSM 861 / OCM 144 / PS)).